The following is a 105-amino-acid chain: Met repressor (105 aa).

The protein belongs to the MetJ family. In terms of assembly, homodimer.

The protein resides in the cytoplasm. Functionally, this regulatory protein, when combined with SAM (S-adenosylmethionine) represses the expression of the methionine regulon and of enzymes involved in SAM synthesis. The polypeptide is Met repressor (Haemophilus influenzae (strain PittEE)).